Reading from the N-terminus, the 321-residue chain is Probable cell division protein WhiA (321 aa).

The H-T-H motif DNA-binding region spans 276–309; sequence NLKELGELLEPPVGKSGVNHRLRKLEKIAEQLHQ.

It belongs to the WhiA family.

In terms of biological role, involved in cell division and chromosome segregation. The sequence is that of Probable cell division protein WhiA from Natranaerobius thermophilus (strain ATCC BAA-1301 / DSM 18059 / JW/NM-WN-LF).